The sequence spans 283 residues: Phosphatidylserine decarboxylase proenzyme (283 aa).

Catalysis depends on charge relay system; for autoendoproteolytic cleavage activity residues aspartate 90, histidine 143, and serine 248. Residue serine 248 is the Schiff-base intermediate with substrate; via pyruvic acid; for decarboxylase activity of the active site. At serine 248 the chain carries Pyruvic acid (Ser); by autocatalysis.

This sequence belongs to the phosphatidylserine decarboxylase family. PSD-B subfamily. Prokaryotic type I sub-subfamily. Heterodimer of a large membrane-associated beta subunit and a small pyruvoyl-containing alpha subunit. Pyruvate serves as cofactor. In terms of processing, is synthesized initially as an inactive proenzyme. Formation of the active enzyme involves a self-maturation process in which the active site pyruvoyl group is generated from an internal serine residue via an autocatalytic post-translational modification. Two non-identical subunits are generated from the proenzyme in this reaction, and the pyruvate is formed at the N-terminus of the alpha chain, which is derived from the carboxyl end of the proenzyme. The autoendoproteolytic cleavage occurs by a canonical serine protease mechanism, in which the side chain hydroxyl group of the serine supplies its oxygen atom to form the C-terminus of the beta chain, while the remainder of the serine residue undergoes an oxidative deamination to produce ammonia and the pyruvoyl prosthetic group on the alpha chain. During this reaction, the Ser that is part of the protease active site of the proenzyme becomes the pyruvoyl prosthetic group, which constitutes an essential element of the active site of the mature decarboxylase.

The protein resides in the cell membrane. It catalyses the reaction a 1,2-diacyl-sn-glycero-3-phospho-L-serine + H(+) = a 1,2-diacyl-sn-glycero-3-phosphoethanolamine + CO2. Its pathway is phospholipid metabolism; phosphatidylethanolamine biosynthesis; phosphatidylethanolamine from CDP-diacylglycerol: step 2/2. Functionally, catalyzes the formation of phosphatidylethanolamine (PtdEtn) from phosphatidylserine (PtdSer). The protein is Phosphatidylserine decarboxylase proenzyme of Francisella tularensis subsp. holarctica (strain OSU18).